A 214-amino-acid polypeptide reads, in one-letter code: Orotate phosphoribosyltransferase (214 aa).

5-phospho-alpha-D-ribose 1-diphosphate is bound at residue lysine 26. Orotate is bound at residue 34 to 35; sequence FF. Residues 72 to 73, arginine 99, lysine 100, lysine 103, histidine 105, and 124 to 132 each bind 5-phospho-alpha-D-ribose 1-diphosphate; these read YK and DDVITAGTA. Orotate contacts are provided by threonine 128 and arginine 157.

It belongs to the purine/pyrimidine phosphoribosyltransferase family. PyrE subfamily. As to quaternary structure, homodimer. The cofactor is Mg(2+).

The catalysed reaction is orotidine 5'-phosphate + diphosphate = orotate + 5-phospho-alpha-D-ribose 1-diphosphate. It functions in the pathway pyrimidine metabolism; UMP biosynthesis via de novo pathway; UMP from orotate: step 1/2. In terms of biological role, catalyzes the transfer of a ribosyl phosphate group from 5-phosphoribose 1-diphosphate to orotate, leading to the formation of orotidine monophosphate (OMP). This Pseudomonas fluorescens (strain SBW25) protein is Orotate phosphoribosyltransferase.